Consider the following 496-residue polypeptide: Probable cytosol aminopeptidase (496 aa).

Residues Lys258 and Asp263 each contribute to the Mn(2+) site. The active site involves Lys270. Asp281, Asp340, and Glu342 together coordinate Mn(2+). Residue Arg344 is part of the active site.

The protein belongs to the peptidase M17 family. It depends on Mn(2+) as a cofactor.

The protein localises to the cytoplasm. It catalyses the reaction Release of an N-terminal amino acid, Xaa-|-Yaa-, in which Xaa is preferably Leu, but may be other amino acids including Pro although not Arg or Lys, and Yaa may be Pro. Amino acid amides and methyl esters are also readily hydrolyzed, but rates on arylamides are exceedingly low.. It carries out the reaction Release of an N-terminal amino acid, preferentially leucine, but not glutamic or aspartic acids.. Functionally, presumably involved in the processing and regular turnover of intracellular proteins. Catalyzes the removal of unsubstituted N-terminal amino acids from various peptides. The sequence is that of Probable cytosol aminopeptidase from Helicobacter pylori (strain Shi470).